The sequence spans 491 residues: UDP-N-acetylmuramoyl-L-alanyl-D-glutamate--2,6-diaminopimelate ligase (491 aa).

Ser30 provides a ligand contact to UDP-N-acetyl-alpha-D-muramoyl-L-alanyl-D-glutamate. An ATP-binding site is contributed by 108 to 114 (GTNGKTT). Residues Asn149, 150-151 (TT), Ser177, Gln183, and Arg185 each bind UDP-N-acetyl-alpha-D-muramoyl-L-alanyl-D-glutamate. Lys217 bears the N6-carboxylysine mark. Residues Arg383, 407-410 (DNPR), Gly458, and Glu462 contribute to the meso-2,6-diaminopimelate site. A Meso-diaminopimelate recognition motif motif is present at residues 407–410 (DNPR).

The protein belongs to the MurCDEF family. MurE subfamily. Mg(2+) serves as cofactor. In terms of processing, carboxylation is probably crucial for Mg(2+) binding and, consequently, for the gamma-phosphate positioning of ATP.

The protein resides in the cytoplasm. It catalyses the reaction UDP-N-acetyl-alpha-D-muramoyl-L-alanyl-D-glutamate + meso-2,6-diaminopimelate + ATP = UDP-N-acetyl-alpha-D-muramoyl-L-alanyl-gamma-D-glutamyl-meso-2,6-diaminopimelate + ADP + phosphate + H(+). It participates in cell wall biogenesis; peptidoglycan biosynthesis. Functionally, catalyzes the addition of meso-diaminopimelic acid to the nucleotide precursor UDP-N-acetylmuramoyl-L-alanyl-D-glutamate (UMAG) in the biosynthesis of bacterial cell-wall peptidoglycan. The sequence is that of UDP-N-acetylmuramoyl-L-alanyl-D-glutamate--2,6-diaminopimelate ligase from Listeria monocytogenes serotype 4b (strain F2365).